A 168-amino-acid polypeptide reads, in one-letter code: NADH-quinone oxidoreductase subunit B (168 aa).

4 residues coordinate [4Fe-4S] cluster: Cys-49, Cys-50, Cys-114, and Cys-144.

This sequence belongs to the complex I 20 kDa subunit family. In terms of assembly, NDH-1 is composed of 14 different subunits. Subunits NuoB, C, D, E, F, and G constitute the peripheral sector of the complex. Requires [4Fe-4S] cluster as cofactor.

The protein resides in the cell membrane. The enzyme catalyses a quinone + NADH + 5 H(+)(in) = a quinol + NAD(+) + 4 H(+)(out). In terms of biological role, NDH-1 shuttles electrons from NADH, via FMN and iron-sulfur (Fe-S) centers, to quinones in the respiratory chain. Couples the redox reaction to proton translocation (for every two electrons transferred, four hydrogen ions are translocated across the cytoplasmic membrane), and thus conserves the redox energy in a proton gradient. This chain is NADH-quinone oxidoreductase subunit B, found in Wolbachia pipientis wMel.